The primary structure comprises 564 residues: Threonine--tRNA ligase (564 aa).

The interval 167–464 (DHRSLGKQLE…LLEKTSGNFP (298 aa)) is catalytic. C260, H311, and H441 together coordinate Zn(2+).

Belongs to the class-II aminoacyl-tRNA synthetase family. Homodimer. It depends on Zn(2+) as a cofactor.

The protein localises to the cytoplasm. It carries out the reaction tRNA(Thr) + L-threonine + ATP = L-threonyl-tRNA(Thr) + AMP + diphosphate + H(+). Its function is as follows. Catalyzes the attachment of threonine to tRNA(Thr) in a two-step reaction: L-threonine is first activated by ATP to form Thr-AMP and then transferred to the acceptor end of tRNA(Thr). Also edits incorrectly charged L-seryl-tRNA(Thr). The polypeptide is Threonine--tRNA ligase (Mycoplasma genitalium (strain ATCC 33530 / DSM 19775 / NCTC 10195 / G37) (Mycoplasmoides genitalium)).